Consider the following 574-residue polypeptide: Proline--tRNA ligase (574 aa).

It belongs to the class-II aminoacyl-tRNA synthetase family. ProS type 1 subfamily. Homodimer.

The protein localises to the cytoplasm. The catalysed reaction is tRNA(Pro) + L-proline + ATP = L-prolyl-tRNA(Pro) + AMP + diphosphate. Functionally, catalyzes the attachment of proline to tRNA(Pro) in a two-step reaction: proline is first activated by ATP to form Pro-AMP and then transferred to the acceptor end of tRNA(Pro). As ProRS can inadvertently accommodate and process non-cognate amino acids such as alanine and cysteine, to avoid such errors it has two additional distinct editing activities against alanine. One activity is designated as 'pretransfer' editing and involves the tRNA(Pro)-independent hydrolysis of activated Ala-AMP. The other activity is designated 'posttransfer' editing and involves deacylation of mischarged Ala-tRNA(Pro). The misacylated Cys-tRNA(Pro) is not edited by ProRS. In Oleidesulfovibrio alaskensis (strain ATCC BAA-1058 / DSM 17464 / G20) (Desulfovibrio alaskensis), this protein is Proline--tRNA ligase.